Reading from the N-terminus, the 223-residue chain is Orotate phosphoribosyltransferase (223 aa).

Residues Arg107, Lys108, Lys111, His113, and 133–141 (EDLTTAGGS) each bind 5-phospho-alpha-D-ribose 1-diphosphate. Thr137 is a binding site for orotate. The span at 192–211 (SPGSRSSSTTRRCRKSSPSS) shows a compositional bias: low complexity. Residues 192-212 (SPGSRSSSTTRRCRKSSPSSM) form a disordered region.

Belongs to the purine/pyrimidine phosphoribosyltransferase family. PyrE subfamily. Homodimer. Mg(2+) serves as cofactor.

It catalyses the reaction orotidine 5'-phosphate + diphosphate = orotate + 5-phospho-alpha-D-ribose 1-diphosphate. Its pathway is pyrimidine metabolism; UMP biosynthesis via de novo pathway; UMP from orotate: step 1/2. Catalyzes the transfer of a ribosyl phosphate group from 5-phosphoribose 1-diphosphate to orotate, leading to the formation of orotidine monophosphate (OMP). This Rhizobium leguminosarum bv. trifolii protein is Orotate phosphoribosyltransferase (pyrE).